The following is a 293-amino-acid chain: GTPase Era (293 aa).

An Era-type G domain is found at 2–168; sequence KILFSTIIGR…INEIKKYSYE (167 aa). Residues 10-17 are G1; it reads GRPNVGKS. Position 10–17 (10–17) interacts with GTP; it reads GRPNVGKS. Residues 36–40 form a G2 region; that stretch reads QATRD. The tract at residues 57 to 60 is G3; it reads DTPG. GTP is bound by residues 57 to 61 and 118 to 121; these read DTPGI and TKID. The segment at 118–121 is G4; sequence TKID. Residues 147 to 149 form a G5 region; sequence ISS. One can recognise a KH type-2 domain in the interval 199–279; the sequence is LEQELPHSIL…KLFLKIKVKK (81 aa).

The protein belongs to the TRAFAC class TrmE-Era-EngA-EngB-Septin-like GTPase superfamily. Era GTPase family. As to quaternary structure, monomer.

It localises to the cytoplasm. The protein localises to the cell membrane. Functionally, an essential GTPase that binds both GDP and GTP, with rapid nucleotide exchange. Plays a role in 16S rRNA processing and 30S ribosomal subunit biogenesis and possibly also in cell cycle regulation and energy metabolism. In Mycoplasmopsis pulmonis (strain UAB CTIP) (Mycoplasma pulmonis), this protein is GTPase Era.